Here is a 1442-residue protein sequence, read N- to C-terminus: ABC transporter G family member 11 (1442 aa).

The ABC transporter 1 domain maps to 125 to 373 (LFTPSFWTKK…FMSLGFDCEP (249 aa)). In terms of domain architecture, ABC transmembrane type-2 1 spans 478–718 (LNDKFGMYSK…EQGSLYFKGD (241 aa)). 6 consecutive transmembrane segments (helical) span residues 482-502 (FGMY…ASLF), 518-538 (AILS…AMTF), 567-587 (IPFT…MFGL), 592-612 (GKFF…TALF), 627-647 (NISN…IPIP), and 737-757 (IIVY…MEYI). Residues 808–1052 (FTWQNIRYTV…LTSYFERHGV (245 aa)) enclose the ABC transporter 2 domain. 844-851 (GSSGAGKT) is an ATP binding site. The 226-residue stretch at 1144 to 1369 (YYTYGSFVQA…YNTCQNYTSA (226 aa)) folds into the ABC transmembrane type-2 2 domain. 6 helical membrane-spanning segments follow: residues 1147-1167 (YGSF…FWNL), 1181-1201 (IFEA…QLII), 1220-1240 (FAIS…TIFF), 1259-1279 (FYFW…GQAV), 1286-1306 (MFFA…FCGV), and 1416-1436 (VGII…FVYL).

Belongs to the ABC transporter superfamily. ABCG family. PDR (TC 3.A.1.205) subfamily.

Its subcellular location is the membrane. The polypeptide is ABC transporter G family member 11 (abcG11) (Dictyostelium discoideum (Social amoeba)).